Reading from the N-terminus, the 1544-residue chain is Zinc finger protein GLI2 (1544 aa).

The disordered stretch occupies residues Met-1–Pro-26. Phosphoserine occurs at positions 145, 230, 232, and 238. Residues Ser-338 to Asn-364 are disordered. Residue Ser-385 is modified to Phosphoserine; by DYRK2. The segment at Thr-417–His-444 adopts a C2H2-type 1 zinc-finger fold. The C2H2-type 2; degenerate zinc-finger motif lies at Gln-455 to His-477. 3 consecutive C2H2-type zinc fingers follow at residues His-483–His-507, Tyr-513–His-538, and Tyr-544–His-569. Disordered stretches follow at residues Asp-557 to Thr-619 and Gly-635 to Asp-682. Positions His-569–Val-585 are enriched in basic and acidic residues. A compositionally biased stretch (low complexity) spans Cys-637–Ala-657. Phosphoserine is present on Ser-707. Residue Thr-708 is modified to Phosphothreonine. Lys-740 bears the N6-acetyllysine; by EP300 mark. 6 disordered regions span residues Ser-781–Val-800, Ser-805–Leu-861, Ala-908–Asp-963, Val-995–Ser-1016, Phe-1166–Met-1220, and Gly-1422–Thr-1457. Composition is skewed to polar residues over residues Ser-790 to Val-800 and Ser-805 to Arg-814. The span at Arg-954–Asp-963 shows a compositional bias: basic and acidic residues. Residue Ser-997 is modified to Phosphoserine; by DYRK2. Composition is skewed to polar residues over residues Ser-997–Ala-1009, Asn-1173–His-1190, and Ser-1200–Arg-1209.

The protein belongs to the GLI C2H2-type zinc-finger protein family. As to quaternary structure, interacts with ZIC1 and ZIC2. Interacts with STK36. Interacts with SUFU; this inhibits transcriptional activation mediated by GLI2. Interacts (via C-terminal internal region) with FOXC1 (via N-terminus); this interaction is direct and increases GLI2 DNA-binding and transcriptional activity through a smoothened (SMO)-independent Hedgehog (Hh) signaling pathway. In terms of processing, phosphorylated in vitro by ULK3. Phosphorylated by DYRK2; this inhibits GLI2 transcription factor activity and promotes proteasomal degradation of GLI2. Post-translationally, acetylation at Lys-740 inhibits Hh target gene expression, probably by impeding entry into chromatin thus preventing promoter occupancy.

It is found in the nucleus. It localises to the cytoplasm. Its subcellular location is the cell projection. The protein localises to the cilium. Functions as a transcription regulator in the hedgehog (Hh) pathway. Functions as a transcriptional activator. May also function as transcriptional repressor. Requires STK36 for full transcriptional activator activity. Binds to the DNA sequence 5'-GAACCACCCA-3' which is part of the TRE-2S regulatory element. Is involved in the smoothened (SHH) signaling pathway. Required for normal skeleton development. This Mus musculus (Mouse) protein is Zinc finger protein GLI2.